Here is a 276-residue protein sequence, read N- to C-terminus: Shikimate dehydrogenase (NADP(+)) (276 aa).

Shikimate contacts are provided by residues 20–22 and Thr67; that span reads SRS. Lys71 serves as the catalytic Proton acceptor. Asp83 lines the NADP(+) pocket. Shikimate contacts are provided by Asn92 and Asp107. NADP(+)-binding positions include 131–135 and Ile217; that span reads GAGGA. Tyr219 serves as a coordination point for shikimate. Residue Gly240 coordinates NADP(+).

The protein belongs to the shikimate dehydrogenase family. In terms of assembly, homodimer.

It carries out the reaction shikimate + NADP(+) = 3-dehydroshikimate + NADPH + H(+). It participates in metabolic intermediate biosynthesis; chorismate biosynthesis; chorismate from D-erythrose 4-phosphate and phosphoenolpyruvate: step 4/7. In terms of biological role, involved in the biosynthesis of the chorismate, which leads to the biosynthesis of aromatic amino acids. Catalyzes the reversible NADPH linked reduction of 3-dehydroshikimate (DHSA) to yield shikimate (SA). The chain is Shikimate dehydrogenase (NADP(+)) from Acidiphilium cryptum (strain JF-5).